Here is a 1040-residue protein sequence, read N- to C-terminus: Multidrug resistance protein MdtB (1040 aa).

12 helical membrane-spanning segments follow: residues leucine 25–alanine 45, leucine 347–alanine 367, isoleucine 369–leucine 389, leucine 396–isoleucine 416, isoleucine 440–phenylalanine 460, phenylalanine 472–proline 492, tryptophan 537–isoleucine 557, leucine 869–isoleucine 889, histidine 890–methionine 910, isoleucine 911–valine 931, isoleucine 968–valine 988, and isoleucine 998–isoleucine 1018.

This sequence belongs to the resistance-nodulation-cell division (RND) (TC 2.A.6) family. MdtB subfamily. Part of a tripartite efflux system composed of MdtA, MdtB and MdtC. MdtB forms a heteromultimer with MdtC.

The protein resides in the cell inner membrane. This chain is Multidrug resistance protein MdtB, found in Salmonella arizonae (strain ATCC BAA-731 / CDC346-86 / RSK2980).